Consider the following 481-residue polypeptide: Betaine aldehyde dehydrogenase 2 (481 aa).

Residues Ser29 and Asp96 each contribute to the K(+) site. 152–154 (GAW) is an NAD(+) binding site. Residue Lys164 is the Charge relay system of the active site. 178–181 (KPSE) is a binding site for NAD(+). Val182 is a binding site for K(+). Residue 231–234 (SVKT) coordinates NAD(+). Ile246 contacts K(+). The Proton acceptor role is filled by Glu252. NAD(+) contacts are provided by Gly254, Cys286, and Glu383. Cys286 functions as the Nucleophile in the catalytic mechanism. Cysteine sulfenic acid (-SOH) is present on Cys286. K(+)-binding residues include Lys453 and Gly456. Glu460 serves as the catalytic Charge relay system.

Belongs to the aldehyde dehydrogenase family. Dimer of dimers. It depends on K(+) as a cofactor.

The enzyme catalyses betaine aldehyde + NAD(+) + H2O = glycine betaine + NADH + 2 H(+). It participates in amine and polyamine biosynthesis; betaine biosynthesis via choline pathway; betaine from betaine aldehyde: step 1/1. Its function is as follows. Involved in the biosynthesis of the osmoprotectant glycine betaine. Catalyzes the irreversible oxidation of betaine aldehyde to the corresponding acid. In Rhizobium meliloti (strain 1021) (Ensifer meliloti), this protein is Betaine aldehyde dehydrogenase 2.